The following is a 535-amino-acid chain: Probable inorganic phosphate transporter 1-7 (535 aa).

Over 1–24 (MAGDQLNVLNALDVAKTQWYHFTA) the chain is Cytoplasmic. The chain crosses the membrane as a helical span at residues 25–45 (IIIAGMGFFTDAYDLFCISLV). Topologically, residues 46 to 70 (TKLLGRIYYHVDGSEKPGTLPPNVS) are extracellular. A helical transmembrane segment spans residues 71–91 (AAVNGVAFCGTLAGQLFFGWL). Residues 92–99 (GDKLGRKK) are Cytoplasmic-facing. A helical transmembrane segment spans residues 100-120 (VYGMTLMVMVLCSIASGLSFG). The Extracellular segment spans residues 121–131 (SNPKTVMTTLC). The chain crosses the membrane as a helical span at residues 132–152 (FFRFWLGFGIGGDYPLSATIM). Residues 153-161 (SEYANKKTR) lie on the Cytoplasmic side of the membrane. A helical transmembrane segment spans residues 162 to 182 (GAFIAAVFAMQGFGILTGGIF). Over 183–211 (AIIVSAAFEAKFPAPTYQIDALASTVPQA) the chain is Extracellular. The chain crosses the membrane as a helical span at residues 212 to 232 (DYVWRIILMVGALPAAMTYYS). At 233–289 (RSKMPETARYTALVAKDAKLAASNMSKVLQVEIEAEQQGTEDKSNSFGLFSKEFMKR) the chain is on the cytoplasmic side. The helical transmembrane segment at 290 to 310 (HGLHLLGTTSTWFLLDIAFYS) threads the bilayer. At 311 to 345 (QNLFQKDIFSAIGWIPPAQTMNAIQEVFKIARAQT) the chain is on the extracellular side. The helical transmembrane segment at 346–366 (LIALCSTVPGYWFTVAFIDVI) threads the bilayer. Residues 367–368 (GR) lie on the Cytoplasmic side of the membrane. A helical transmembrane segment spans residues 369–389 (FAIQMMGFFFMTVFMFALAIP). Topologically, residues 390–399 (YDHWTHKENR) are extracellular. The helical transmembrane segment at 400 to 420 (IGFVAMYSLTFFFANFGPNAT) threads the bilayer. The Cytoplasmic portion of the chain corresponds to 421–438 (TFVVPAEIFPARFRSTCH). A helical transmembrane segment spans residues 439–459 (GISAASGKLGAMVGAFGFLYL). Residues 460 to 480 (AQSPDKTKTEHGYPPGIGVKN) are Extracellular-facing. Residues 481–501 (SLIVLGVVNLLGMVFTLLVPE) form a helical membrane-spanning segment. Residues 502 to 535 (SKGKSLEEMSGENEQNDESSSSSNNNSNNAVSTA) lie on the Cytoplasmic side of the membrane. The disordered stretch occupies residues 506–535 (SLEEMSGENEQNDESSSSSNNNSNNAVSTA). Positions 519–535 (ESSSSSNNNSNNAVSTA) are enriched in low complexity. Residue Ser520 is modified to Phosphoserine.

The protein belongs to the major facilitator superfamily. Phosphate:H(+) symporter (TC 2.A.1.9) family. In terms of tissue distribution, mature pollen.

The protein resides in the membrane. Its function is as follows. High-affinity transporter for external inorganic phosphate. The polypeptide is Probable inorganic phosphate transporter 1-7 (PHT1-7) (Arabidopsis thaliana (Mouse-ear cress)).